Here is a 236-residue protein sequence, read N- to C-terminus: Sugar fermentation stimulation protein homolog (236 aa).

This sequence belongs to the SfsA family.

This Desulfotalea psychrophila (strain LSv54 / DSM 12343) protein is Sugar fermentation stimulation protein homolog.